The sequence spans 532 residues: Protein DA1 (532 aa).

The segment at 26–71 (VYYDNYPTASHDDEPSAADTDADNDEPHHTQEPSTSEDNTSNDQEN) is disordered. Positions 57–68 (EPSTSEDNTSND) are enriched in polar residues. The region spanning 69-88 (QENEDIDRAIALSLLEENQE) is the UIM 1 domain. Lys-95 is covalently cross-linked (Glycyl lysine isopeptide (Lys-Gly) (interchain with G-Cter in ubiquitin)). Positions 101–120 (DEDEQLARALQESMVVGNSP) constitute a UIM 2 domain. The LIM zinc-binding domain maps to 170–230 (RICAGCNMEI…KACYRERYHP (61 aa)). Residues Lys-221, Lys-348, Lys-376, Lys-381, Lys-391, Lys-474, Lys-475, and Lys-519 each participate in a glycyl lysine isopeptide (Lys-Gly) (interchain with G-Cter in ubiquitin) cross-link.

As to quaternary structure, interacts with ubiquitin. Interacts (via C-terminus) with DA2. Interacts with BB. Interacts with UBP15. Interacts with TCP14 and TCP15. In terms of processing, ubiquitinated at Lys-95, Lys-221, Lys-348, Lys-376, Lys-381, Lys-391, Lys-474, Lys-475 and Lys-519 by the E3 ubiquitin-protein ligases BB and DA2.

Ubiquitin receptor that limits final seed and organ size by restricting the period of cell proliferation. May act maternally to control seed mass. Acts synergistically with DA2 to regulate seed size. Functions synergistically with DA2 to restrict cell proliferation in the maternal integuments of ovules and developing seeds. Functions antagonistically in a common pathway with UBP15 to regulate seed size. Associates physically with UBP15 and modulates the stability of UBP15, which promote cell proliferation in the integuments of ovules and developing seeds. Functions as a peptidase and cleaves the N-terminal sequence of E3 ubiquitin-protein ligases BB and DA2 in a ubiquitin-dependent manner. Cleaves the deubiquitinating enzyme UBP15, which promotes cell proliferation, and the transcription factors TCP15 and TCP22, which promote cell proliferation and repress endoreduplication. Involved in the promotion of leaf senescence, in addition to its function in restricting plant growth. Acts redundantly with DAR1 and DAR2 to regulate endoreduplication during leaf development. Together with DAR1 and DAR2, modulates the protein stability of the transcription factors TCP14 and TCP15, which repress endoreduplication by directly regulating the expression of cell-cycle genes. The protein is Protein DA1 (DA1) of Arabidopsis thaliana (Mouse-ear cress).